The sequence spans 94 residues: Co-chaperonin GroES (94 aa).

The protein belongs to the GroES chaperonin family. In terms of assembly, heptamer of 7 subunits arranged in a ring. Interacts with the chaperonin GroEL.

It is found in the cytoplasm. Together with the chaperonin GroEL, plays an essential role in assisting protein folding. The GroEL-GroES system forms a nano-cage that allows encapsulation of the non-native substrate proteins and provides a physical environment optimized to promote and accelerate protein folding. GroES binds to the apical surface of the GroEL ring, thereby capping the opening of the GroEL channel. This chain is Co-chaperonin GroES, found in Parageobacillus thermoglucosidasius (Geobacillus thermoglucosidasius).